A 155-amino-acid polypeptide reads, in one-letter code: NADPH-dependent 7-cyano-7-deazaguanine reductase (155 aa).

The Thioimide intermediate role is filled by Cys52. Asp59 functions as the Proton donor in the catalytic mechanism. Substrate is bound by residues 74 to 76 and 93 to 94; these read VES and HE.

Belongs to the GTP cyclohydrolase I family. QueF type 1 subfamily.

The protein localises to the cytoplasm. The enzyme catalyses 7-aminomethyl-7-carbaguanine + 2 NADP(+) = 7-cyano-7-deazaguanine + 2 NADPH + 3 H(+). It functions in the pathway tRNA modification; tRNA-queuosine biosynthesis. Functionally, catalyzes the NADPH-dependent reduction of 7-cyano-7-deazaguanine (preQ0) to 7-aminomethyl-7-deazaguanine (preQ1). This is NADPH-dependent 7-cyano-7-deazaguanine reductase from Syntrophobacter fumaroxidans (strain DSM 10017 / MPOB).